A 241-amino-acid chain; its full sequence is Glutamate/aspartate import ATP-binding protein GltL (241 aa).

The 235-residue stretch at 2–236 (ITLKNVSKWY…PKSDRAKDFL (235 aa)) folds into the ABC transporter domain. 34-41 (GPSGSGKS) lines the ATP pocket.

This sequence belongs to the ABC transporter superfamily. In terms of assembly, the complex is composed of two ATP-binding proteins (GltL), two transmembrane proteins (GltJ and GltK) and a solute-binding protein (GltI).

It localises to the cell inner membrane. The enzyme catalyses a polar amino acid(out) + ATP + H2O = a polar amino acid(in) + ADP + phosphate + H(+). The catalysed reaction is L-glutamate(out) + ATP + H2O = L-glutamate(in) + ADP + phosphate + H(+). It catalyses the reaction L-aspartate(out) + ATP + H2O = L-aspartate(in) + ADP + phosphate + H(+). In terms of biological role, part of the ABC transporter complex GltIJKL involved in glutamate and aspartate uptake. Probably responsible for energy coupling to the transport system. This is Glutamate/aspartate import ATP-binding protein GltL (gltL) from Escherichia coli O157:H7.